The sequence spans 207 residues: MTSPVRILGIDPGLRRTGWGLITAQGTKLTYGDCGVVTSDGELPLALRLRELFEGIGRIVEAVRPDEVAVEETFVNKDAQATLKLGHARAMALLVPALAGLPVFEYAPNLIKKTVAGSGHAEKVQIQAMVRFLLPKAEFRVADAADALAIAITHASHRDAHALRQAHLPGGKRRSLTGQAAAGQGLAGKGFSAAAAARIEAALAKQG.

Active-site residues include D11, E71, and D143. Mg(2+) is bound by residues D11, E71, and D143.

The protein belongs to the RuvC family. As to quaternary structure, homodimer which binds Holliday junction (HJ) DNA. The HJ becomes 2-fold symmetrical on binding to RuvC with unstacked arms; it has a different conformation from HJ DNA in complex with RuvA. In the full resolvosome a probable DNA-RuvA(4)-RuvB(12)-RuvC(2) complex forms which resolves the HJ. It depends on Mg(2+) as a cofactor.

The protein resides in the cytoplasm. The enzyme catalyses Endonucleolytic cleavage at a junction such as a reciprocal single-stranded crossover between two homologous DNA duplexes (Holliday junction).. Functionally, the RuvA-RuvB-RuvC complex processes Holliday junction (HJ) DNA during genetic recombination and DNA repair. Endonuclease that resolves HJ intermediates. Cleaves cruciform DNA by making single-stranded nicks across the HJ at symmetrical positions within the homologous arms, yielding a 5'-phosphate and a 3'-hydroxyl group; requires a central core of homology in the junction. The consensus cleavage sequence is 5'-(A/T)TT(C/G)-3'. Cleavage occurs on the 3'-side of the TT dinucleotide at the point of strand exchange. HJ branch migration catalyzed by RuvA-RuvB allows RuvC to scan DNA until it finds its consensus sequence, where it cleaves and resolves the cruciform DNA. The sequence is that of Crossover junction endodeoxyribonuclease RuvC from Methylobacterium radiotolerans (strain ATCC 27329 / DSM 1819 / JCM 2831 / NBRC 15690 / NCIMB 10815 / 0-1).